The sequence spans 732 residues: Protein kinase YpkA (732 aa).

In terms of domain architecture, Protein kinase spans 136–408; the sequence is VAETDKFAEG…SNEARLHEFL (273 aa). ATP-binding positions include 142–150 and K163; that span reads FAEGESHIS. D270 (proton acceptor) is an active-site residue.

Belongs to the protein kinase superfamily. Ser/Thr protein kinase family.

Its subcellular location is the secreted. The catalysed reaction is L-seryl-[protein] + ATP = O-phospho-L-seryl-[protein] + ADP + H(+). It carries out the reaction L-threonyl-[protein] + ATP = O-phospho-L-threonyl-[protein] + ADP + H(+). Its function is as follows. Acts as a virulence determinant. In Yersinia pestis, this protein is Protein kinase YpkA (ypkA).